A 1217-amino-acid chain; its full sequence is ATP-dependent helicase/nuclease subunit A (1217 aa).

Residues 10–475 (VIWTDAQWQS…IDLSQNFRSR (466 aa)) form the UvrD-like helicase ATP-binding domain. Residue 31–38 (AAAGSGKT) participates in ATP binding. Positions 476–786 (KEVLSTTNYI…RMMTIHSSKG (311 aa)) constitute a UvrD-like helicase C-terminal domain.

It belongs to the helicase family. AddA subfamily. In terms of assembly, heterodimer of AddA and AddB/RexB. Requires Mg(2+) as cofactor.

The enzyme catalyses Couples ATP hydrolysis with the unwinding of duplex DNA by translocating in the 3'-5' direction.. It carries out the reaction ATP + H2O = ADP + phosphate + H(+). Functionally, the heterodimer acts as both an ATP-dependent DNA helicase and an ATP-dependent, dual-direction single-stranded exonuclease. Recognizes the chi site generating a DNA molecule suitable for the initiation of homologous recombination. The AddA nuclease domain is required for chi fragment generation; this subunit has the helicase and 3' -&gt; 5' nuclease activities. The chain is ATP-dependent helicase/nuclease subunit A from Staphylococcus aureus (strain USA300).